Consider the following 350-residue polypeptide: 4-hydroxy-3-methylbut-2-en-1-yl diphosphate synthase (flavodoxin) (350 aa).

Cys-263, Cys-266, Cys-298, and Glu-305 together coordinate [4Fe-4S] cluster.

The protein belongs to the IspG family. The cofactor is [4Fe-4S] cluster.

It carries out the reaction (2E)-4-hydroxy-3-methylbut-2-enyl diphosphate + oxidized [flavodoxin] + H2O + 2 H(+) = 2-C-methyl-D-erythritol 2,4-cyclic diphosphate + reduced [flavodoxin]. It functions in the pathway isoprenoid biosynthesis; isopentenyl diphosphate biosynthesis via DXP pathway; isopentenyl diphosphate from 1-deoxy-D-xylulose 5-phosphate: step 5/6. Its function is as follows. Converts 2C-methyl-D-erythritol 2,4-cyclodiphosphate (ME-2,4cPP) into 1-hydroxy-2-methyl-2-(E)-butenyl 4-diphosphate. The protein is 4-hydroxy-3-methylbut-2-en-1-yl diphosphate synthase (flavodoxin) of Nautilia profundicola (strain ATCC BAA-1463 / DSM 18972 / AmH).